A 528-amino-acid polypeptide reads, in one-letter code: Bifunctional purine biosynthesis protein PurH (528 aa).

An MGS-like domain is found at 2-149; sequence TDLAPLRRAL…KNHGFVSVVV (148 aa).

It belongs to the PurH family.

It carries out the reaction (6R)-10-formyltetrahydrofolate + 5-amino-1-(5-phospho-beta-D-ribosyl)imidazole-4-carboxamide = 5-formamido-1-(5-phospho-D-ribosyl)imidazole-4-carboxamide + (6S)-5,6,7,8-tetrahydrofolate. The catalysed reaction is IMP + H2O = 5-formamido-1-(5-phospho-D-ribosyl)imidazole-4-carboxamide. It participates in purine metabolism; IMP biosynthesis via de novo pathway; 5-formamido-1-(5-phospho-D-ribosyl)imidazole-4-carboxamide from 5-amino-1-(5-phospho-D-ribosyl)imidazole-4-carboxamide (10-formyl THF route): step 1/1. The protein operates within purine metabolism; IMP biosynthesis via de novo pathway; IMP from 5-formamido-1-(5-phospho-D-ribosyl)imidazole-4-carboxamide: step 1/1. The protein is Bifunctional purine biosynthesis protein PurH of Roseobacter denitrificans (strain ATCC 33942 / OCh 114) (Erythrobacter sp. (strain OCh 114)).